The following is a 136-amino-acid chain: Protein NrdI (136 aa).

Belongs to the NrdI family.

Probably involved in ribonucleotide reductase function. This chain is Protein NrdI, found in Shigella dysenteriae serotype 1 (strain Sd197).